Here is an 89-residue protein sequence, read N- to C-terminus: MSDRKAVIKNADMSEDMQQDAVDCATQAMEKYNIEKDIAAYIKKEFDKKYNPTWHCIVGRNFGSYVTHETKHFIYFYLGQVAILLFKSG.

Belongs to the dynein light chain family. In terms of assembly, homodimer. The cytoplasmic dynein 1 complex consists of two catalytic heavy chains (HCs) and a number of non-catalytic subunits which present intermediate chains (ICs), light intermediate chains (LICs) and light chains (LCs); the composition seems to vary in respect to the IC, LIC and LC composition. The heavy chain homodimer serves as a scaffold for the probable homodimeric assembly of the respective non-catalytic subunits. Dynein ICs and LICs bind directly to the HC dimer and the LCs assemble on the IC dimer. Interacts with DYNC1I1. Interacts with BMF. Component of the myosin V motor complex. Interacts with BCAS1. Interacts with Basson/BSN. Interacts with AMBRA1 (via TQT motifs); tethering AMBRA1 to the cytoskeleton. Interacts with IQUB.

It is found in the cytoplasm. It localises to the cytoskeleton. Functionally, acts as one of several non-catalytic accessory components of the cytoplasmic dynein 1 complex that are thought to be involved in linking dynein to cargos and to adapter proteins that regulate dynein function. Cytoplasmic dynein 1 acts as a motor for the intracellular retrograde motility of vesicles and organelles along microtubules. May play a role in changing or maintaining the spatial distribution of cytoskeletal structures. The sequence is that of Dynein light chain 2, cytoplasmic (DYNLL2) from Homo sapiens (Human).